The following is a 444-amino-acid chain: Glutamate-1-semialdehyde 2,1-aminomutase (444 aa).

K278 is subject to N6-(pyridoxal phosphate)lysine.

The protein belongs to the class-III pyridoxal-phosphate-dependent aminotransferase family. HemL subfamily. As to quaternary structure, homodimer. The cofactor is pyridoxal 5'-phosphate.

It localises to the cytoplasm. It carries out the reaction (S)-4-amino-5-oxopentanoate = 5-aminolevulinate. It functions in the pathway porphyrin-containing compound metabolism; protoporphyrin-IX biosynthesis; 5-aminolevulinate from L-glutamyl-tRNA(Glu): step 2/2. The protein is Glutamate-1-semialdehyde 2,1-aminomutase of Deinococcus radiodurans (strain ATCC 13939 / DSM 20539 / JCM 16871 / CCUG 27074 / LMG 4051 / NBRC 15346 / NCIMB 9279 / VKM B-1422 / R1).